Consider the following 146-residue polypeptide: Transmembrane protein 207 (146 aa).

Positions 1 to 29 are cleaved as a signal peptide; the sequence is MSRSRLFSVTSAISTIGILCLPLFQLVLS. A helical transmembrane segment spans residues 52–72; it reads IWILLLLVLVAALLCGAVVLC.

Interacts with WWOX. Expressed in some signet-ring cell carcinoma, especially those showing high invasion and metastatic activity (at protein level).

The protein localises to the membrane. This chain is Transmembrane protein 207 (TMEM207), found in Homo sapiens (Human).